The sequence spans 1166 residues: ATP-dependent helicase/deoxyribonuclease subunit B (1166 aa).

One can recognise a UvrD-like helicase ATP-binding domain in the interval 1–278 (MGAEFLVGRS…LNLDITYKEL (278 aa)). ATP-binding residues include Ser-10, Gly-11, Lys-14, Thr-15, Lys-16, Thr-236, and Arg-283. The UvrD-like helicase C-terminal domain maps to 281 to 586 (TERHTKTPEL…TFSLIPPALD (306 aa)). Residues Cys-801, Cys-1121, Cys-1124, and Cys-1130 each contribute to the [4Fe-4S] cluster site.

This sequence belongs to the helicase family. AddB/RexB type 1 subfamily. Heterodimer of AddA and AddB. The cofactor is At low magnesium concentrations there is no nuclease activity, but helicase activity is unaffected.. Mg(2+) serves as cofactor. Requires [4Fe-4S] cluster as cofactor.

In terms of biological role, the heterodimer acts both as a highly processive, ATP-dependent DNA helicase and as an ATP-dependent single-stranded exonuclease, acting in both directions. Recognizes the B.subtilis Chi site (5'-AGCGG-3') which transforms the enzyme from a helicase which degrades both DNA strands to one with only 5' to 3' exonuclease activity. This generates a double-stranded DNA with a protruding 3'-terminated single-stranded tail suitable for the initiation of homologous recombination (Chi fragment). The AddB nuclease domain is not required for Chi fragment generation but for recognition of the Chi site; this subunit has 5' -&gt; 3' nuclease activity but no helicase activity. The helicase activity of isolated AddA acts on 3'-tailed substrate and requires AddB to bind to blunt-ended DNA. RecA thread formation during DNA double-strand break repair requires RecJ or AddAB. The sequence is that of ATP-dependent helicase/deoxyribonuclease subunit B from Bacillus subtilis (strain 168).